The sequence spans 602 residues: Beta-(1--&gt;2)glucan export ATP-binding/permease protein NdvA (602 aa).

An ABC transmembrane type-1 domain is found at 21–311 (GWTLAVANLL…VVSFVNSLMM (291 aa)). 6 helical membrane-spanning segments follow: residues 22–42 (WTLAVANLLLATAQFAEPVLF), 68–88 (LLAAWVGFGLFTILCSATVAL), 146–166 (EHFAAILSLVVLLPLSLYINW), 167–187 (RLAILLFALCGVFTVLTTLVV), 254–274 (VITRASTTITVLAIFSLGIAL), and 276–296 (QQGLTSVGEIVMFVSFATLLI). The region spanning 345 to 579 (VEFLDVSFSY…RGRFAELARA (235 aa)) is the ABC transporter domain. 378 to 385 (GATGAGKS) contributes to the ATP binding site.

The protein belongs to the ABC transporter superfamily. Beta-(1--&gt;2)glucan exporter (TC 3.A.1.108.1) family. Homodimer.

It localises to the cell inner membrane. It catalyses the reaction [(1-&gt;2)-beta-D-glucosyl](n)(in) + ATP + H2O = [(1-&gt;2)-beta-D-glucosyl](n)(out) + ADP + phosphate + H(+). In terms of biological role, involved in beta-(1--&gt;2)glucan export. Transmembrane domains (TMD) form a pore in the inner membrane and the ATP-binding domain (NBD) is responsible for energy generation. The chain is Beta-(1--&gt;2)glucan export ATP-binding/permease protein NdvA from Rhodopseudomonas palustris (strain BisB5).